We begin with the raw amino-acid sequence, 287 residues long: Large ribosomal subunit protein uL2 (287 aa).

The tract at residues 221-287 is disordered; that stretch reads RGSVMNPCDH…SKRSRGGRDS (67 aa). Positions 258 to 287 are enriched in basic residues; sequence KTRKRNKPSNRFVLRKRRRVSKRSRGGRDS.

The protein belongs to the universal ribosomal protein uL2 family. In terms of assembly, part of the 50S ribosomal subunit. Forms a bridge to the 30S subunit in the 70S ribosome.

Functionally, one of the primary rRNA binding proteins. Required for association of the 30S and 50S subunits to form the 70S ribosome, for tRNA binding and peptide bond formation. It has been suggested to have peptidyltransferase activity; this is somewhat controversial. Makes several contacts with the 16S rRNA in the 70S ribosome. The sequence is that of Large ribosomal subunit protein uL2 from Prochlorococcus marinus (strain SARG / CCMP1375 / SS120).